A 405-amino-acid chain; its full sequence is Indoleamine 2,3-dioxygenase 2 (405 aa).

Residue His-347 participates in heme binding.

It belongs to the indoleamine 2,3-dioxygenase family. Requires heme as cofactor. In terms of tissue distribution, expressed mainly in antigen-presenting immune cells, liver, kidney, brain, and placenta. Highly expressed in kidney, followed by epididymis and liver (at protein level). Detected in the tails of the spermatozoa in the testis and in the kidney tubules (at protein level). Constitutively expressed in brain.

The enzyme catalyses L-tryptophan + O2 = N-formyl-L-kynurenine. The protein operates within amino-acid degradation; L-tryptophan degradation via kynurenine pathway; L-kynurenine from L-tryptophan: step 1/2. Its activity is regulated as follows. Activity is inhibited by D-1MT (1-methyl-D-tryptophan) and MTH-trp (methylthiohydantoin-DL-tryptophan) but not L-1MT (1-methyl-L-tryptophan). Its function is as follows. Catalyzes the first and rate-limiting step in the kynurenine pathway of tryptophan catabolism. Involved in immune regulation. The sequence is that of Indoleamine 2,3-dioxygenase 2 from Mus musculus (Mouse).